The sequence spans 334 residues: L-lactate dehydrogenase (334 aa).

The disordered stretch occupies residues 1–22; sequence MASTKGKLIHEMVPSKERDPPH. The span at 8–22 shows a compositional bias: basic and acidic residues; that stretch reads LIHEMVPSKERDPPH. Residues 31–59 and Arg101 contribute to the NAD(+) site; that span reads GQVGMAAAISVLLRDLADELALVDVVEDR. Substrate is bound by residues Arg108, Asn140, and Arg171. Asn140 is an NAD(+) binding site. Residue His195 is the Proton acceptor of the active site. Thr250 lines the substrate pocket.

The protein belongs to the LDH/MDH superfamily. LDH family. As to quaternary structure, homotetramer.

The protein localises to the cytoplasm. It catalyses the reaction (S)-lactate + NAD(+) = pyruvate + NADH + H(+). Its pathway is fermentation; pyruvate fermentation to lactate; (S)-lactate from pyruvate: step 1/1. The chain is L-lactate dehydrogenase from Petromyzon marinus (Sea lamprey).